The chain runs to 119 residues: Large ribosomal subunit protein bL20 (119 aa).

Belongs to the bacterial ribosomal protein bL20 family.

In terms of biological role, binds directly to 23S ribosomal RNA and is necessary for the in vitro assembly process of the 50S ribosomal subunit. It is not involved in the protein synthesizing functions of that subunit. This Streptococcus mutans serotype c (strain ATCC 700610 / UA159) protein is Large ribosomal subunit protein bL20.